Here is a 628-residue protein sequence, read N- to C-terminus: U-box domain-containing protein 10 (628 aa).

The 75-residue stretch at 242–316 folds into the U-box domain; sequence TIPEDFLCPI…SQWCTKHNIE (75 aa). 5 ARM repeats span residues 373–413, 415–454, 456–495, 497–537, and 539–578; these read TDNR…NLSI, EHNK…SLSL, DENK…NLCI, QGNK…VLAS, and QVAK…CLCK.

The catalysed reaction is S-ubiquitinyl-[E2 ubiquitin-conjugating enzyme]-L-cysteine + [acceptor protein]-L-lysine = [E2 ubiquitin-conjugating enzyme]-L-cysteine + N(6)-ubiquitinyl-[acceptor protein]-L-lysine.. It functions in the pathway protein modification; protein ubiquitination. Functions as an E3 ubiquitin ligase. This is U-box domain-containing protein 10 (PUB10) from Arabidopsis thaliana (Mouse-ear cress).